We begin with the raw amino-acid sequence, 248 residues long: E3 SUMO-protein ligase NSE2 (248 aa).

M1 bears the N-acetylmethionine mark. Residues K92 and K109 each participate in a glycyl lysine isopeptide (Lys-Gly) (interchain with G-Cter in SUMO2) cross-link. A Phosphoserine modification is found at S118. Residues K127 and K132 each participate in a glycyl lysine isopeptide (Lys-Gly) (interchain with G-Cter in SUMO2) cross-link. The SP-RING-type zinc finger occupies 156–242 (VDEDMIVTQS…LRRAIESHKK (87 aa)). Residues C187, H189, C212, and C217 each contribute to the Zn(2+) site.

This sequence belongs to the NSE2 family. Component of the SMC5-SMC6 complex which consists at least of SMC5, SMC6, NSMCE2, NSMCE1, NSMCE4A or EID3 and NSMCE3. Post-translationally, sumoylated, possibly via autosumoylation.

The protein localises to the nucleus. Its subcellular location is the chromosome. It is found in the telomere. The protein resides in the PML body. It participates in protein modification; protein sumoylation. In terms of biological role, E3 SUMO-protein ligase component of the SMC5-SMC6 complex, a complex involved in DNA double-strand break repair by homologous recombination. Is not be required for the stability of the complex. The complex may promote sister chromatid homologous recombination by recruiting the SMC1-SMC3 cohesin complex to double-strand breaks. Acts as an E3 ligase mediating SUMO attachment to various proteins such as SMC6L1 and TSNAX, the shelterin complex subunits TERF1, TERF2, TINF2 and TERF2IP, RAD51AP1, and maybe the cohesin components RAD21 and STAG2. Required for recruitment of telomeres to PML nuclear bodies. Required for sister chromatid cohesion during prometaphase and mitotic progression. The sequence is that of E3 SUMO-protein ligase NSE2 (NSMCE2) from Bos taurus (Bovine).